We begin with the raw amino-acid sequence, 314 residues long: MEIILANPRGFCAGVHRAISIVDRALDIFTPPIYVRHEVVHNQYVVDDLRARGAVFVEELDEVPENSIVIFSAHGVAQSVRAEAKRRDLKIFDATCPLVTKVHMEVTRASRRGQECILIGHQGHPEVVGTMGQYDNPQGGIYLIESPEDIKKLEVKNPNSLCFSSQTTLSVDDTANIIKALREKFPKIDGPRKDDICYATQNRQDAVKALAERSDLVLVVGSTNSSNSNRLQEKASCVGVNAYLIDSEKDIKTEWLENVKVVGVTAGASAPEVLVKEVIARLKKLGGTVVTENLGVEENIIFEVPAELRIKQID.

[4Fe-4S] cluster is bound at residue cysteine 12. 2 residues coordinate (2E)-4-hydroxy-3-methylbut-2-enyl diphosphate: histidine 41 and histidine 74. Dimethylallyl diphosphate contacts are provided by histidine 41 and histidine 74. Isopentenyl diphosphate-binding residues include histidine 41 and histidine 74. Cysteine 96 contacts [4Fe-4S] cluster. Residue histidine 124 participates in (2E)-4-hydroxy-3-methylbut-2-enyl diphosphate binding. Residue histidine 124 participates in dimethylallyl diphosphate binding. Histidine 124 is a binding site for isopentenyl diphosphate. Glutamate 126 acts as the Proton donor in catalysis. (2E)-4-hydroxy-3-methylbut-2-enyl diphosphate is bound at residue threonine 167. Residue cysteine 197 participates in [4Fe-4S] cluster binding. (2E)-4-hydroxy-3-methylbut-2-enyl diphosphate contacts are provided by serine 225, serine 226, asparagine 227, and serine 269. Serine 225, serine 226, asparagine 227, and serine 269 together coordinate dimethylallyl diphosphate. Residues serine 225, serine 226, asparagine 227, and serine 269 each contribute to the isopentenyl diphosphate site.

This sequence belongs to the IspH family. [4Fe-4S] cluster serves as cofactor.

The catalysed reaction is isopentenyl diphosphate + 2 oxidized [2Fe-2S]-[ferredoxin] + H2O = (2E)-4-hydroxy-3-methylbut-2-enyl diphosphate + 2 reduced [2Fe-2S]-[ferredoxin] + 2 H(+). The enzyme catalyses dimethylallyl diphosphate + 2 oxidized [2Fe-2S]-[ferredoxin] + H2O = (2E)-4-hydroxy-3-methylbut-2-enyl diphosphate + 2 reduced [2Fe-2S]-[ferredoxin] + 2 H(+). Its pathway is isoprenoid biosynthesis; dimethylallyl diphosphate biosynthesis; dimethylallyl diphosphate from (2E)-4-hydroxy-3-methylbutenyl diphosphate: step 1/1. It participates in isoprenoid biosynthesis; isopentenyl diphosphate biosynthesis via DXP pathway; isopentenyl diphosphate from 1-deoxy-D-xylulose 5-phosphate: step 6/6. Functionally, catalyzes the conversion of 1-hydroxy-2-methyl-2-(E)-butenyl 4-diphosphate (HMBPP) into a mixture of isopentenyl diphosphate (IPP) and dimethylallyl diphosphate (DMAPP). Acts in the terminal step of the DOXP/MEP pathway for isoprenoid precursor biosynthesis. The polypeptide is 4-hydroxy-3-methylbut-2-enyl diphosphate reductase (Psychromonas ingrahamii (strain DSM 17664 / CCUG 51855 / 37)).